The sequence spans 158 residues: RNA pyrophosphohydrolase (158 aa).

The 144-residue stretch at 6-149 (GYRLNVGIVL…KRHVYRKVMK (144 aa)) folds into the Nudix hydrolase domain. The short motif at 38–59 (GGINIGETPEQAMYRELFEEIG) is the Nudix box element.

It belongs to the Nudix hydrolase family. RppH subfamily. It depends on a divalent metal cation as a cofactor.

In terms of biological role, accelerates the degradation of transcripts by removing pyrophosphate from the 5'-end of triphosphorylated RNA, leading to a more labile monophosphorylated state that can stimulate subsequent ribonuclease cleavage. The protein is RNA pyrophosphohydrolase of Blochmanniella floridana.